A 713-amino-acid polypeptide reads, in one-letter code: Polyribonucleotide nucleotidyltransferase (713 aa).

Aspartate 488 and aspartate 494 together coordinate Mg(2+). A KH domain is found at 555 to 614 (PRIEVMNIPTDKIRDVIGSGGKVIREIVEKTGAKINIEDDGTVKIASSNGKEIEAAKKWI). The 69-residue stretch at 624–692 (GEIYEGTVVK…ERGKVRLSMK (69 aa)) folds into the S1 motif domain.

This sequence belongs to the polyribonucleotide nucleotidyltransferase family. Requires Mg(2+) as cofactor.

It localises to the cytoplasm. The catalysed reaction is RNA(n+1) + phosphate = RNA(n) + a ribonucleoside 5'-diphosphate. In terms of biological role, involved in mRNA degradation. Catalyzes the phosphorolysis of single-stranded polyribonucleotides processively in the 3'- to 5'-direction. The protein is Polyribonucleotide nucleotidyltransferase of Brucella anthropi (strain ATCC 49188 / DSM 6882 / CCUG 24695 / JCM 21032 / LMG 3331 / NBRC 15819 / NCTC 12168 / Alc 37) (Ochrobactrum anthropi).